The primary structure comprises 1038 residues: GTPase-activating Rap/Ran-GAP domain-like protein 3 (1038 aa).

Residues lysine 6 and serine 68 each carry the phosphoserine modification. Residues 214 to 430 enclose the Rap-GAP domain; the sequence is LLVLEEQEGS…RTLDMLIRSL (217 aa). Phosphoserine occurs at positions 449 and 455. The CNH domain maps to 512-824; it reads PHEAVCADPW…QLVASRSDIY (313 aa). Disordered regions lie at residues 833–863 and 937–1038; these read EGSSGGSSKGASAHTSPQTPPARDTPLFPSS and LLGL…IDLK. The residue at position 851 (threonine 851) is a Phosphothreonine. Positions 1019–1028 are enriched in polar residues; sequence SGSSPFQLMA.

This sequence belongs to the GARNL3 family.

This is GTPase-activating Rap/Ran-GAP domain-like protein 3 (Garnl3) from Mus musculus (Mouse).